A 212-amino-acid polypeptide reads, in one-letter code: 3,4-dihydroxy-2-butanone 4-phosphate synthase (212 aa).

D-ribulose 5-phosphate is bound by residues 37–38, aspartate 42, 150–154, and glutamate 174; these read RE and RRGHT. Residue glutamate 38 participates in Mg(2+) binding. Histidine 153 serves as a coordination point for Mg(2+).

The protein belongs to the DHBP synthase family. As to quaternary structure, homodimer. It depends on Mg(2+) as a cofactor. Mn(2+) serves as cofactor.

It catalyses the reaction D-ribulose 5-phosphate = (2S)-2-hydroxy-3-oxobutyl phosphate + formate + H(+). Its pathway is cofactor biosynthesis; riboflavin biosynthesis; 2-hydroxy-3-oxobutyl phosphate from D-ribulose 5-phosphate: step 1/1. Functionally, catalyzes the conversion of D-ribulose 5-phosphate to formate and 3,4-dihydroxy-2-butanone 4-phosphate. This is 3,4-dihydroxy-2-butanone 4-phosphate synthase from Shewanella piezotolerans (strain WP3 / JCM 13877).